We begin with the raw amino-acid sequence, 191 residues long: Large ribosomal subunit protein uL5 (191 aa).

Belongs to the universal ribosomal protein uL5 family. As to quaternary structure, part of the 50S ribosomal subunit; part of the 5S rRNA/L5/L18/L25 subcomplex. Contacts the 5S rRNA and the P site tRNA. Forms a bridge to the 30S subunit in the 70S ribosome.

Its function is as follows. This is one of the proteins that bind and probably mediate the attachment of the 5S RNA into the large ribosomal subunit, where it forms part of the central protuberance. In the 70S ribosome it contacts protein S13 of the 30S subunit (bridge B1b), connecting the 2 subunits; this bridge is implicated in subunit movement. Contacts the P site tRNA; the 5S rRNA and some of its associated proteins might help stabilize positioning of ribosome-bound tRNAs. The chain is Large ribosomal subunit protein uL5 from Corynebacterium glutamicum (strain R).